Here is a 545-residue protein sequence, read N- to C-terminus: Chaperonin GroEL (545 aa).

ATP contacts are provided by residues 29 to 32 (TLGP), lysine 50, 86 to 90 (DGTTT), glycine 415, and aspartate 495.

Belongs to the chaperonin (HSP60) family. As to quaternary structure, forms a cylinder of 14 subunits composed of two heptameric rings stacked back-to-back. Interacts with the co-chaperonin GroES.

Its subcellular location is the cytoplasm. It carries out the reaction ATP + H2O + a folded polypeptide = ADP + phosphate + an unfolded polypeptide.. Its function is as follows. Together with its co-chaperonin GroES, plays an essential role in assisting protein folding. The GroEL-GroES system forms a nano-cage that allows encapsulation of the non-native substrate proteins and provides a physical environment optimized to promote and accelerate protein folding. The protein is Chaperonin GroEL of Bacteroides fragilis (strain ATCC 25285 / DSM 2151 / CCUG 4856 / JCM 11019 / LMG 10263 / NCTC 9343 / Onslow / VPI 2553 / EN-2).